Here is a 397-residue protein sequence, read N- to C-terminus: Protein PEP-RELATED DEVELOPMENT ARRESTED 1, chloroplastic (397 aa).

The N-terminal 52 residues, Met-1–Cys-52, are a transit peptide targeting the chloroplast. Residues Lys-315–Lys-334 show a composition bias toward basic and acidic residues. The disordered stretch occupies residues Lys-315–Pro-351.

In terms of assembly, interacts with FSD2 and MRL7. Highly expressed in young leaves, shoots and flowers. Expressed at low levels in stems and siliques.

It localises to the plastid. The protein resides in the chloroplast stroma. The protein localises to the chloroplast nucleoid. Functionally, plays an essential role in early steps of chloroplast development. May be involved in the redox control of plastid gene expression by maintening the redox state around chloroplast nucleoids. May positively regulate plastid-encoded RNA polymerase (PEP) activity, through binding to FSD2. This chain is Protein PEP-RELATED DEVELOPMENT ARRESTED 1, chloroplastic (PRDA1), found in Arabidopsis thaliana (Mouse-ear cress).